A 23-amino-acid chain; its full sequence is Potassium channel toxin kappa-KTx 2.3 (23 aa).

2 cysteine pairs are disulfide-bonded: cysteine 4–cysteine 22 and cysteine 8–cysteine 18.

Belongs to the short scorpion toxin superfamily. Potassium channel inhibitor kappa-KTx family. Kappa-KTx 2 subfamily. Expressed by the venom gland.

The protein resides in the secreted. Its function is as follows. Decreases the amplitude of the potassium current of the rat channels Kv1.1/KCNA1 by 33% and Kv1.2/KCNA2 by 8% as well as human Kv1.3/KCNA3 by 70%. In Opisthacanthus madagascariensis (Scorpion), this protein is Potassium channel toxin kappa-KTx 2.3.